A 398-amino-acid polypeptide reads, in one-letter code: Odorant receptor 24a (398 aa).

The Cytoplasmic segment spans residues 1-14 (MLPRFLTASYPMER). A helical transmembrane segment spans residues 15–31 (HYFMVPKFALSLIGFYP). At 32-46 (EQKRTVLVKLWSFFN) the chain is on the extracellular side. A helical transmembrane segment spans residues 47–67 (FFILTYGCYAEAYYGIHYIPI). Over 68 to 74 (NIATALD) the chain is Cytoplasmic. Residues 75-95 (ALCPVASSILSLVKMVAIWWY) traverse the membrane as a helical segment. Residues 96 to 124 (QDELRSLIERVRFLTEQQKSKRKLGYKKR) are Extracellular-facing. Residues 125–145 (FYTLATQLTFLLLCCGFCTST) traverse the membrane as a helical segment. At 146 to 199 (SYSVRHLIDNILRRTHGKDWIYETPFKMMFPDLLLRLPLYPITYILVHWHGYIT) the chain is on the cytoplasmic side. A helical membrane pass occupies residues 200–220 (VVCFVGADGFFLGFCLYFTVL). At 221–269 (LLCLQDDVCDLLEVENIEKSPSEAEEARIVREMEKLVDRHNEVAELTER) the chain is on the extracellular side. The chain crosses the membrane as a helical span at residues 270–290 (LSGVMVEITLAHFVTSSLIIG). The Cytoplasmic segment spans residues 291–295 (TSVVD). The helical transmembrane segment at 296-316 (ILLFSGLGIIVYVVYTCAVGV) threads the bilayer. At 317-398 (EIFLYCLGGS…SLIALAKSVI (82 aa)) the chain is on the extracellular side.

It belongs to the insect chemoreceptor superfamily. Heteromeric odorant receptor channel (TC 1.A.69) family. Or1a subfamily. In terms of assembly, interacts with Orco. Complexes exist early in the endomembrane system in olfactory sensory neurons (OSNs), coupling these complexes to the conserved ciliary trafficking pathway. As to expression, not expressed in either the antenna or maxillary palp.

It is found in the cell membrane. In terms of biological role, odorant receptor which mediates acceptance or avoidance behavior, depending on its substrates. The odorant receptor repertoire encodes a large collection of odor stimuli that vary widely in identity, intensity, and duration. May form a complex with Orco to form odorant-sensing units, providing sensitive and prolonged odorant signaling and calcium permeability. Involved in the behavioral responses to pentanol, hexanol, octanol, nonanol, propyl acetate, butyl acetate, isoamyl acetate, methyl caproate, anisole, heptanal, 2-heptanone, r-carvone, and nonanoic acid. Also responds to pyrazines. This Drosophila melanogaster (Fruit fly) protein is Odorant receptor 24a (Or24a).